Reading from the N-terminus, the 97-residue chain is Cystatin-A (97 aa).

At M1 the chain carries N-acetylmethionine. The short motif at 46–50 (QVVAG) is the Secondary area of contact element.

The protein belongs to the cystatin family.

Its subcellular location is the cytoplasm. Functionally, this is an intracellular thiol proteinase inhibitor. The protein is Cystatin-A (Csta) of Mus musculus (Mouse).